We begin with the raw amino-acid sequence, 216 residues long: Probable nicotinate-nucleotide adenylyltransferase (216 aa).

It belongs to the NadD family.

The enzyme catalyses nicotinate beta-D-ribonucleotide + ATP + H(+) = deamido-NAD(+) + diphosphate. It functions in the pathway cofactor biosynthesis; NAD(+) biosynthesis; deamido-NAD(+) from nicotinate D-ribonucleotide: step 1/1. Its function is as follows. Catalyzes the reversible adenylation of nicotinate mononucleotide (NaMN) to nicotinic acid adenine dinucleotide (NaAD). This is Probable nicotinate-nucleotide adenylyltransferase from Shewanella baltica (strain OS185).